Consider the following 360-residue polypeptide: Peptide chain release factor 1 (360 aa).

Residue Gln235 is modified to N5-methylglutamine.

This sequence belongs to the prokaryotic/mitochondrial release factor family. In terms of processing, methylated by PrmC. Methylation increases the termination efficiency of RF1.

It is found in the cytoplasm. Peptide chain release factor 1 directs the termination of translation in response to the peptide chain termination codons UAG and UAA. In Mannheimia succiniciproducens (strain KCTC 0769BP / MBEL55E), this protein is Peptide chain release factor 1.